A 296-amino-acid polypeptide reads, in one-letter code: uncharacterized protein (296 aa).

The N-terminal stretch at 1-20 is a signal peptide; the sequence is MKKLLLIIITVFFAFNVAQA.

This is an uncharacterized protein from Rickettsia felis (strain ATCC VR-1525 / URRWXCal2) (Rickettsia azadi).